Reading from the N-terminus, the 205-residue chain is Holliday junction branch migration complex subunit RuvA (205 aa).

Residues 1-64 (MIGKLKGLID…EDQIKLFGFR (64 aa)) are domain I. The domain II stretch occupies residues 65-143 (TDHEREWFRL…ALSNVDPAVV (79 aa)). A flexible linker region spans residues 144–154 (QLSGALDDNRA). The interval 154-205 (APRPVTDAISALVNLGYGQPQAAAAIAAAARAAGDDAATAQLIKLGLKELSK) is domain III.

It belongs to the RuvA family. Homotetramer. Forms an RuvA(8)-RuvB(12)-Holliday junction (HJ) complex. HJ DNA is sandwiched between 2 RuvA tetramers; dsDNA enters through RuvA and exits via RuvB. An RuvB hexamer assembles on each DNA strand where it exits the tetramer. Each RuvB hexamer is contacted by two RuvA subunits (via domain III) on 2 adjacent RuvB subunits; this complex drives branch migration. In the full resolvosome a probable DNA-RuvA(4)-RuvB(12)-RuvC(2) complex forms which resolves the HJ.

It localises to the cytoplasm. Functionally, the RuvA-RuvB-RuvC complex processes Holliday junction (HJ) DNA during genetic recombination and DNA repair, while the RuvA-RuvB complex plays an important role in the rescue of blocked DNA replication forks via replication fork reversal (RFR). RuvA specifically binds to HJ cruciform DNA, conferring on it an open structure. The RuvB hexamer acts as an ATP-dependent pump, pulling dsDNA into and through the RuvAB complex. HJ branch migration allows RuvC to scan DNA until it finds its consensus sequence, where it cleaves and resolves the cruciform DNA. This Rhodopseudomonas palustris (strain BisB5) protein is Holliday junction branch migration complex subunit RuvA.